The chain runs to 573 residues: MSLSGLISTTTFKEQPAIVRRSGNYKPPLWDAHFIQSLQVIYTEESYGKRINELKEDVRRILEKEAENPLVKLEQINDLSRLGISYHFEDQIKAILNLTYNNNNALWKKDNLYATALHFKLLRQYGFNPVSSEIFNAFKDEKKEFKESLSKDVKGMVCLYEASFYSFRGEPILDEARDFTTKHLKQYLMMTRQGQNVDHDDDNDLMVKLVEHALELPVHWRMKRLEARWFIDMYAEMSHHHHMNSTFLQLAKLDFNVVQSTYQEDLKHVVRWWKTTSLGERLPFARDRIVEIFLWSVGLKFEPQFRYCRKMLTKIGQLVTTMDDIFDVYGTLDELSLFQHALGRWDINTIDQLPDYMKIFFLATYNVVNEMAYDVLKQNGILIIKYLKKTWTDLCKCYMLEANWYHSGYTPSLEEYIKNGWISIAEPLILVNLYCLITNPIKEDDIDCLLQYPTFIRISGIIARLVDDLGTSSDELKRGDNPKSIQCYMKENGICDEKNGREHIRNLISETWKEMNEARVGESPFSQAFIETAIDFVRTAMMIYQKEQDGVGTNIDHYTKDGIISLFFTSIPI.

(2E)-geranyl diphosphate contacts are provided by Arg286, Asp323, Asp327, Arg464, and Asp467. Residues Asp323 and Asp327 each contribute to the Mg(2+) site. The DDXXD motif motif lies at 323 to 327 (DDIFD). Positions 467, 471, and 475 each coordinate Mg(2+).

It belongs to the terpene synthase family. Tpsb subfamily. It depends on Mg(2+) as a cofactor. Mn(2+) serves as cofactor. In terms of tissue distribution, expressed in glandular trichomes two to four weeks after flowering onset.

It catalyses the reaction (2E)-geranyl diphosphate = beta-myrcene + diphosphate. The catalysed reaction is (2E)-geranyl diphosphate = (1R,5R)-alpha-pinene + diphosphate. It carries out the reaction (2E)-geranyl diphosphate = sabinene + diphosphate. The enzyme catalyses (2E)-geranyl diphosphate = (4S)-limonene + diphosphate. It catalyses the reaction (2E)-geranyl diphosphate = terpinolene + diphosphate. The catalysed reaction is (2E)-geranyl diphosphate = camphene + diphosphate. It functions in the pathway secondary metabolite biosynthesis; terpenoid biosynthesis. Its function is as follows. Involved in monoterpene (C10) olefins biosynthesis, constituants of cannabinoids and terpenoids-rich resins. Catalyzes mainly the conversion of (2E)-geranyl diphosphate to beta-myrcene, and also produces minor products such as alpha-pinene, camphene, sabinene, limonene and terpinolene. The chain is Myrcene synthase TPS5FN from Cannabis sativa (Hemp).